The chain runs to 112 residues: Ribonuclease P protein component (112 aa).

Belongs to the RnpA family. In terms of assembly, consists of a catalytic RNA component (M1 or rnpB) and a protein subunit.

The catalysed reaction is Endonucleolytic cleavage of RNA, removing 5'-extranucleotides from tRNA precursor.. Its function is as follows. RNaseP catalyzes the removal of the 5'-leader sequence from pre-tRNA to produce the mature 5'-terminus. It can also cleave other RNA substrates such as 4.5S RNA. The protein component plays an auxiliary but essential role in vivo by binding to the 5'-leader sequence and broadening the substrate specificity of the ribozyme. This Clostridium kluyveri (strain ATCC 8527 / DSM 555 / NBRC 12016 / NCIMB 10680 / K1) protein is Ribonuclease P protein component.